Reading from the N-terminus, the 272-residue chain is Tryptophan synthase alpha chain (272 aa).

Active-site proton acceptor residues include Glu-49 and Glu-60.

The protein belongs to the TrpA family. As to quaternary structure, tetramer of two alpha and two beta chains.

The catalysed reaction is (1S,2R)-1-C-(indol-3-yl)glycerol 3-phosphate + L-serine = D-glyceraldehyde 3-phosphate + L-tryptophan + H2O. It functions in the pathway amino-acid biosynthesis; L-tryptophan biosynthesis; L-tryptophan from chorismate: step 5/5. Functionally, the alpha subunit is responsible for the aldol cleavage of indoleglycerol phosphate to indole and glyceraldehyde 3-phosphate. The polypeptide is Tryptophan synthase alpha chain (Legionella pneumophila subsp. pneumophila (strain Philadelphia 1 / ATCC 33152 / DSM 7513)).